An 86-amino-acid chain; its full sequence is Large ribosomal subunit protein bL27 (86 aa).

Over residues 1-10 the composition is skewed to gly residues; sequence MAQKKGGGST. The segment at 1 to 21 is disordered; it reads MAQKKGGGSTRNGRDSESKRL.

This sequence belongs to the bacterial ribosomal protein bL27 family.

This chain is Large ribosomal subunit protein bL27, found in Ralstonia pickettii (strain 12J).